Consider the following 260-residue polypeptide: MQFDVITLFPEMFRALTDWGITSRAAKQQRYALRSWNPRDFTVDNYRTIDDRPYGGGPGMVMLAKPLDDAIDAAVAAQAQAGVAKPHVVLMSPQGKTLTHAKVMELARRPGLVLLCGRYEAIDQRLIDRRVDEEISLGDFVLSGGELPAMALIDAVVRHLPGVLGDAQSAVQDSFVNGLLDCPHYTRPEEYEGVRVPDILLGGHHAEIEKWRRQQALANTASKRPDLIEAAREQGLLTRADEKFLSEWAAKAGRGETPAR.

S-adenosyl-L-methionine contacts are provided by residues Gly117 and Leu137–Leu142.

Belongs to the RNA methyltransferase TrmD family. Homodimer.

It is found in the cytoplasm. It catalyses the reaction guanosine(37) in tRNA + S-adenosyl-L-methionine = N(1)-methylguanosine(37) in tRNA + S-adenosyl-L-homocysteine + H(+). Specifically methylates guanosine-37 in various tRNAs. In Cupriavidus taiwanensis (strain DSM 17343 / BCRC 17206 / CCUG 44338 / CIP 107171 / LMG 19424 / R1) (Ralstonia taiwanensis (strain LMG 19424)), this protein is tRNA (guanine-N(1)-)-methyltransferase.